Consider the following 792-residue polypeptide: Serine/threonine-protein kinase Nek4 (792 aa).

The 256-residue stretch at 6–261 (YCYMRVVGRG…VRSILRQPYI (256 aa)) folds into the Protein kinase domain. Residues 12–20 (VGRGSYGEV) and Lys-35 contribute to the ATP site. Asp-131 acts as the Proton acceptor in catalysis. Thr-165 is subject to Phosphothreonine; by autocatalysis. 4 disordered regions span residues 329–358 (QEKP…NTGE), 379–515 (ANAG…LPSY), 527–611 (QQND…SITQ), and 628–657 (LSED…TNEM). 2 positions are modified to phosphoserine: Ser-340 and Ser-343. Polar residues-rich tracts occupy residues 412–421 (QGNTKSSDQP), 456–467 (DQVTGIIENQDS), 473–484 (QPHSSMSEPSLS), 496–505 (AHSGTKSQFQ), and 541–551 (VNSSRTSSTAS). Residue Lys-566 is modified to N6-methyllysine. Over residues 602–611 (RFSSDCSITQ) the composition is skewed to polar residues. Residues 641 to 657 (DKSDGDSREGKSHTNEM) show a composition bias toward basic and acidic residues. At Ser-675 the chain carries Phosphoserine.

Belongs to the protein kinase superfamily. NEK Ser/Thr protein kinase family. NIMA subfamily. Mn(2+) serves as cofactor. Expressed ubiquitously among various organs and is up-regulated in the testis.

It is found in the cytoplasm. The protein localises to the cell projection. It localises to the cilium. The enzyme catalyses L-seryl-[protein] + ATP = O-phospho-L-seryl-[protein] + ADP + H(+). The catalysed reaction is L-threonyl-[protein] + ATP = O-phospho-L-threonyl-[protein] + ADP + H(+). Its function is as follows. Required for normal entry into proliferative arrest after a limited number of cell divisions, also called replicative senescence. Required for normal cell cycle arrest in response to double-stranded DNA damage. Protein kinase that seems to act exclusively upon threonine residues. This is Serine/threonine-protein kinase Nek4 (Nek4) from Mus musculus (Mouse).